The chain runs to 735 residues: Cyclic nucleotide-gated channel cone photoreceptor subunit alpha (735 aa).

Topologically, residues 1–214 (MAKINTQHSY…PSSNMYYNWL (214 aa)) are cytoplasmic. A disordered region spans residues 142–191 (VNFSNNTNEDKKEEKKEVKEEKKEEKKEEKKEEKKDDKKDDKKDDKKDDK). The segment covering 149–191 (NEDKKEEKKEVKEEKKEEKKEEKKEEKKDDKKDDKKDDKKDDK) has biased composition (basic and acidic residues). A helical transmembrane segment spans residues 215–236 (TIIAAPVFYNWCMLICRACFDE). Over 237 to 246 (LQIDHIKLWL) the chain is Extracellular. Residues 247-267 (FLDYCSDIIYVFDMFVRFRTG) traverse the membrane as a helical segment. The Cytoplasmic portion of the chain corresponds to 268–292 (FLEQGLLVKDEKKLRDHYTQTVQFK). A helical membrane pass occupies residues 293–311 (LDVLSLLPTDLAYLKLGLN). Residues 312–316 (YPELR) lie on the Extracellular side of the membrane. Residues 317–335 (FNRLLRIARLFEFFDRTET) traverse the membrane as a helical segment. Residues 336 to 342 (RTNYPNM) are Cytoplasmic-facing. Residues 343–366 (FRIGNLVLYILIIIHWNACIYFAI) form a helical membrane-spanning segment. Residues 367–389 (SKVIGFGTDSWVYPNVSIPEYGR) lie on the Extracellular side of the membrane. Helical transmembrane passes span 390–424 (LSRKYIYSLYWSTLTLTTIGETPPPVKDEEYLFVV) and 425–449 (IDFLVGVLIFATIVGNVGSMISNMN). Residues 450–735 (ASRAEFQAKV…PEKPEEQKKD (286 aa)) are Cytoplasmic-facing. Residues 532–654 (LLIE…DNLI), Glu-591, and Arg-606 contribute to the 3',5'-cyclic GMP site. The disordered stretch occupies residues 715-735 (GSGSLSVGEPEPEKPEEQKKD). Basic and acidic residues predominate over residues 725-735 (EPEKPEEQKKD).

It belongs to the cyclic nucleotide-gated cation channel (TC 1.A.1.5) family.

It localises to the membrane. Its function is as follows. Visual signal transduction is mediated by a G-protein coupled cascade using cGMP as second messenger. This protein can be activated by cyclic GMP which leads to an opening of the cation channel and thereby causing a depolarization of cone photoreceptors. The sequence is that of Cyclic nucleotide-gated channel cone photoreceptor subunit alpha from Gallus gallus (Chicken).